Consider the following 514-residue polypeptide: NAD(P)H-quinone oxidoreductase subunit 2 (514 aa).

14 helical membrane passes run 16–36 (IWPE…DLIV), 43–63 (WLPY…YFEW), 80–100 (LSIV…LMSV), 110–130 (LAEF…LSGA), 133–153 (LVMI…MTGY), 168–188 (LLIG…LYGL), 211–231 (LGLA…ISAV), 245–265 (PTPV…ALAI), 279–299 (WHFI…VVAL), 307–327 (MLAY…TANS), 335–355 (IFYL…IILF), 379–399 (LGLS…GFFG), 411–431 (GLYG…YYYI), and 467–487 (VGLV…NPLF).

It belongs to the complex I subunit 2 family. NDH-1 can be composed of about 15 different subunits; different subcomplexes with different compositions have been identified which probably have different functions.

It localises to the cellular thylakoid membrane. It carries out the reaction a plastoquinone + NADH + (n+1) H(+)(in) = a plastoquinol + NAD(+) + n H(+)(out). The enzyme catalyses a plastoquinone + NADPH + (n+1) H(+)(in) = a plastoquinol + NADP(+) + n H(+)(out). Its function is as follows. NDH-1 shuttles electrons from an unknown electron donor, via FMN and iron-sulfur (Fe-S) centers, to quinones in the respiratory and/or the photosynthetic chain. The immediate electron acceptor for the enzyme in this species is believed to be plastoquinone. Couples the redox reaction to proton translocation, and thus conserves the redox energy in a proton gradient. Cyanobacterial NDH-1 also plays a role in inorganic carbon-concentration. This Gloeothece citriformis (strain PCC 7424) (Cyanothece sp. (strain PCC 7424)) protein is NAD(P)H-quinone oxidoreductase subunit 2.